We begin with the raw amino-acid sequence, 250 residues long: Triosephosphate isomerase (250 aa).

Position 9–11 (9–11 (NWK)) interacts with substrate. H94 functions as the Electrophile in the catalytic mechanism. E166 serves as the catalytic Proton acceptor. Residues G172, S212, and 233 to 234 (GG) contribute to the substrate site.

The protein belongs to the triosephosphate isomerase family. As to quaternary structure, homodimer.

The protein resides in the cytoplasm. The catalysed reaction is D-glyceraldehyde 3-phosphate = dihydroxyacetone phosphate. The protein operates within carbohydrate biosynthesis; gluconeogenesis. It functions in the pathway carbohydrate degradation; glycolysis; D-glyceraldehyde 3-phosphate from glycerone phosphate: step 1/1. Involved in the gluconeogenesis. Catalyzes stereospecifically the conversion of dihydroxyacetone phosphate (DHAP) to D-glyceraldehyde-3-phosphate (G3P). This chain is Triosephosphate isomerase, found in Clostridium novyi (strain NT).